Reading from the N-terminus, the 652-residue chain is DNA ligase (652 aa).

NAD(+) is bound by residues 29-33 (DSEYD), 78-79 (SL), and Glu107. Residue Lys109 is the N6-AMP-lysine intermediate of the active site. Residues Arg130, Glu164, Lys278, and Lys302 each coordinate NAD(+). Residues Cys395, Cys398, Cys413, and Cys418 each coordinate Zn(2+). Residues 577–652 (AADAVLSGKT…IQDEAWLEQL (76 aa)) enclose the BRCT domain.

It belongs to the NAD-dependent DNA ligase family. LigA subfamily. Mg(2+) serves as cofactor. The cofactor is Mn(2+).

It catalyses the reaction NAD(+) + (deoxyribonucleotide)n-3'-hydroxyl + 5'-phospho-(deoxyribonucleotide)m = (deoxyribonucleotide)n+m + AMP + beta-nicotinamide D-nucleotide.. Its function is as follows. DNA ligase that catalyzes the formation of phosphodiester linkages between 5'-phosphoryl and 3'-hydroxyl groups in double-stranded DNA using NAD as a coenzyme and as the energy source for the reaction. It is essential for DNA replication and repair of damaged DNA. This Streptococcus gordonii (strain Challis / ATCC 35105 / BCRC 15272 / CH1 / DL1 / V288) protein is DNA ligase.